Reading from the N-terminus, the 96-residue chain is Large ribosomal subunit protein bL28 (96 aa).

The interval 1–21 (MSRVCELTGKGPMTGNNVSHA) is disordered.

This sequence belongs to the bacterial ribosomal protein bL28 family.

This is Large ribosomal subunit protein bL28 from Jannaschia sp. (strain CCS1).